The chain runs to 389 residues: Succinate--CoA ligase [ADP-forming] subunit beta (389 aa).

Positions 9–236 constitute an ATP-grasp domain; it reads RDMFEAHGVP…KDSADPLEAK (228 aa). ATP-binding positions include lysine 45, 52–54, alanine 94, and glutamate 99; that span reads GRG. Residues asparagine 191 and aspartate 205 each coordinate Mg(2+). Substrate-binding positions include asparagine 256 and 318–320; that span reads GIT.

This sequence belongs to the succinate/malate CoA ligase beta subunit family. Heterotetramer of two alpha and two beta subunits. Requires Mg(2+) as cofactor.

It carries out the reaction succinate + ATP + CoA = succinyl-CoA + ADP + phosphate. It catalyses the reaction GTP + succinate + CoA = succinyl-CoA + GDP + phosphate. Its pathway is carbohydrate metabolism; tricarboxylic acid cycle; succinate from succinyl-CoA (ligase route): step 1/1. In terms of biological role, succinyl-CoA synthetase functions in the citric acid cycle (TCA), coupling the hydrolysis of succinyl-CoA to the synthesis of either ATP or GTP and thus represents the only step of substrate-level phosphorylation in the TCA. The beta subunit provides nucleotide specificity of the enzyme and binds the substrate succinate, while the binding sites for coenzyme A and phosphate are found in the alpha subunit. This chain is Succinate--CoA ligase [ADP-forming] subunit beta, found in Renibacterium salmoninarum (strain ATCC 33209 / DSM 20767 / JCM 11484 / NBRC 15589 / NCIMB 2235).